The chain runs to 397 residues: Cysteine desulfurase IscS (397 aa).

Pyridoxal 5'-phosphate-binding positions include 72-73 (GS), Asn152, Gln180, and 200-202 (SAH). Lys203 is subject to N6-(pyridoxal phosphate)lysine. Thr238 lines the pyridoxal 5'-phosphate pocket. The active-site Cysteine persulfide intermediate is the Cys328. A [2Fe-2S] cluster-binding site is contributed by Cys328.

It belongs to the class-V pyridoxal-phosphate-dependent aminotransferase family. NifS/IscS subfamily. As to quaternary structure, homodimer. Forms a heterotetramer with IscU, interacts with other sulfur acceptors. The cofactor is pyridoxal 5'-phosphate.

It is found in the cytoplasm. It carries out the reaction (sulfur carrier)-H + L-cysteine = (sulfur carrier)-SH + L-alanine. The protein operates within cofactor biosynthesis; iron-sulfur cluster biosynthesis. In terms of biological role, master enzyme that delivers sulfur to a number of partners involved in Fe-S cluster assembly, tRNA modification or cofactor biosynthesis. Catalyzes the removal of elemental sulfur atoms from cysteine to produce alanine. Functions as a sulfur delivery protein for Fe-S cluster synthesis onto IscU, an Fe-S scaffold assembly protein, as well as other S acceptor proteins. This Clostridium botulinum (strain Kyoto / Type A2) protein is Cysteine desulfurase IscS.